We begin with the raw amino-acid sequence, 273 residues long: Transcriptional regulator ICP22 homolog (273 aa).

2 disordered regions span residues 1–57 (GSCR…YGLP) and 160–273 (YEQR…SARR). The span at 11-33 (PSTSPIIPSLSPSSGGNPSPRSS) shows a compositional bias: low complexity. Acidic residues-rich tracts occupy residues 178-194 (EECEVSGDESPSEEEEA) and 204-224 (SPEEESASSDFESFSDEEDDS). Positions 261 to 273 (VPKGGRPAKSARR) are enriched in low complexity.

This sequence belongs to the herpesviridae ICP22 family.

The chain is Transcriptional regulator ICP22 homolog from Equus caballus (Horse).